Reading from the N-terminus, the 3183-residue chain is WD repeat- and FYVE domain-containing protein 4 (3183 aa).

The span at 1-15 shows a compositional bias: basic and acidic residues; it reads MEAEDLSKTEDRPED. Disordered regions lie at residues 1 to 37, 790 to 811, 938 to 977, and 1828 to 1852; these read MEAEDLSKTEDRPEDPGFQNEGQSPAVKPSFSLEGQS, AGQEPSVDAQKAEAGGRQGKFK, KSLHLPPGHEDNPGCSGSCAATAEKPTDSSPRPGGSQALR, and KETTSESSRNTSSPGASAEASHAAE. Residues 1832 to 1852 show a composition bias toward low complexity; the sequence is SESSRNTSSPGASAEASHAAE. Positions 2383 to 2508 constitute a BEACH-type PH domain; sequence LDGEKVSQKV…DRSKALKSFS (126 aa). Positions 2525–2819 constitute a BEACH domain; that stretch reads NLRKHPGFDR…QIFTKPHPSR (295 aa). The tract at residues 2812-2836 is disordered; the sequence is FTKPHPSRNTTGKNPGPGKDASTPV. WD repeat units lie at residues 2930–2969, 2979–3018, 3021–3060, 3070–3108, and 3150–3183; these read LAAWGPCLCAVCPSPTMIVTSGASAVVCIWELSLVKGRPR, GHTQAVTCLTASVTFSLLVSGSQDRTCILWDLDHLSRVAC, VHREGISAIAISDVSGTIVSCAGAHLSLWNVNGQPLASIT, TCCCIVEGPAWDASHVIITGSKDGMVRIWKTEDVKMPVP, and KASPAVTALAITRNQSKLLVGDEKGRIFCWSADG.

As to quaternary structure, interacts with HSP90AB1. Highly expressed in immune tissues, especially B lymphocytes.

The protein resides in the early endosome. It localises to the endoplasmic reticulum. Functionally, plays a critical role in the regulation of cDC1-mediated cross-presentation of viral and tumor antigens in dendritic cells. Mechanistically, acts near the plasma membrane and interacts with endosomal membranes to promote endosomal-to-cytosol antigen trafficking. Also plays a role in B-cell survival through regulation of autophagy. In Mus musculus (Mouse), this protein is WD repeat- and FYVE domain-containing protein 4.